The following is a 366-amino-acid chain: Galactoside alpha-(1,2)-fucosyltransferase 1 (366 aa).

The Cytoplasmic portion of the chain corresponds to 1 to 8 (MWPLSHRH). The chain crosses the membrane as a helical; Signal-anchor for type II membrane protein span at residues 9–25 (LCLAFLLVCVLSAISFF). The Lumenal segment spans residues 26–366 (LHIHQDSIRH…LSPLWTLAEP (341 aa)). Residues Asn66, Asn302, and Asn328 are each glycosylated (N-linked (GlcNAc...) asparagine).

Belongs to the glycosyltransferase 11 family.

The protein localises to the golgi apparatus. It is found in the golgi stack membrane. The enzyme catalyses a beta-D-galactosyl-(1-&gt;4)-N-acetyl-beta-D-glucosaminyl derivative + GDP-beta-L-fucose = an alpha-L-Fuc-(1-&gt;2)-beta-D-Gal-(1-&gt;4)-beta-D-GlcNAc derivative + GDP + H(+). It carries out the reaction a ganglioside GA1 + GDP-beta-L-fucose = a ganglioside Fuc-GA1 + GDP + H(+). It catalyses the reaction a beta-D-Gal-(1-&gt;3)-beta-D-GlcNAc-(1-&gt;3)-beta-D-Gal-(1-&gt;4)-beta-D-Glc-(1&lt;-&gt;1')-Cer(d18:1(4E)) + GDP-beta-L-fucose = alpha-L-fucosyl-(1-&gt;2)- beta-D-galactosyl-(1-&gt;3)-N-acetyl-beta-D-glucosaminyl-(1-&gt;3)-beta-D-galactosyl-(1-&gt;4)-beta-D-glucosyl-(1&lt;-&gt;1')-N-acylsphing-4-enine + GDP + H(+). The catalysed reaction is a neolactoside nLc4Cer(d18:1(4E)) + GDP-beta-L-fucose = a neolactoside IV(2)-alpha-Fuc-nLc4Cer(d18:1(4E)) + GDP + H(+). The enzyme catalyses a ganglioside GM1 + GDP-beta-L-fucose = a ganglioside Fuc-GM1 + GDP + H(+). It carries out the reaction beta-D-galactosyl-(1-&gt;3)-N-acetyl-D-galactosamine + GDP-beta-L-fucose = alpha-L-fucosyl-(1-&gt;2)-beta-D-galactosyl-(1-&gt;3)-N-acetyl-D-galactosamine + GDP + H(+). It functions in the pathway protein modification; protein glycosylation. Its function is as follows. Catalyzes the transfer of L-fucose, from a guanosine diphosphate-beta-L-fucose, to the terminal galactose residue of glycoconjugates through an alpha(1,2) linkage leading to H antigen synthesis that is an intermediate substrate in the synthesis of ABO blood group antigens. H antigen is essential for maturation of the glomerular layer of the main olfactory bulb, in cell migration and early cell-cell contacts during tumor associated angiogenesis. Preferentially fucosylates soluble lactose and to a lesser extent fucosylates glycolipids gangliosides GA1 and GM1a. The polypeptide is Galactoside alpha-(1,2)-fucosyltransferase 1 (Aotus nancymaae (Ma's night monkey)).